The primary structure comprises 576 residues: Eukaryotic translation initiation factor 3 subunit L (576 aa).

A PCI domain is found at 330-536 (DAIRVFANIL…IHIADTKVAR (207 aa)).

This sequence belongs to the eIF-3 subunit L family. As to quaternary structure, component of the eukaryotic translation initiation factor 3 (eIF-3) complex, which is composed of 13 subunits: eif3a, eif3b, eif3c, eif3d, eif3e, eif3f, eif3g, eif3h, eif3i, eif3j, eif3k, eif3l and eif3m.

The protein resides in the cytoplasm. Component of the eukaryotic translation initiation factor 3 (eIF-3) complex, which is involved in protein synthesis of a specialized repertoire of mRNAs and, together with other initiation factors, stimulates binding of mRNA and methionyl-tRNAi to the 40S ribosome. The eIF-3 complex specifically targets and initiates translation of a subset of mRNAs involved in cell proliferation. The chain is Eukaryotic translation initiation factor 3 subunit L (eif3l) from Danio rerio (Zebrafish).